The chain runs to 205 residues: NADH-quinone oxidoreductase subunit I (205 aa).

2 consecutive 4Fe-4S ferredoxin-type domains span residues 75-104 and 114-143; these read RLLE…METS and HEYT…HGGR. [4Fe-4S] cluster contacts are provided by Cys-84, Cys-87, Cys-90, Cys-94, Cys-123, Cys-126, Cys-129, and Cys-133.

It belongs to the complex I 23 kDa subunit family. NDH-1 is composed of 14 different subunits. Subunits NuoA, H, J, K, L, M, N constitute the membrane sector of the complex. It depends on [4Fe-4S] cluster as a cofactor.

It is found in the cell inner membrane. It carries out the reaction a quinone + NADH + 5 H(+)(in) = a quinol + NAD(+) + 4 H(+)(out). In terms of biological role, NDH-1 shuttles electrons from NADH, via FMN and iron-sulfur (Fe-S) centers, to quinones in the respiratory chain. The immediate electron acceptor for the enzyme in this species is believed to be ubiquinone. Couples the redox reaction to proton translocation (for every two electrons transferred, four hydrogen ions are translocated across the cytoplasmic membrane), and thus conserves the redox energy in a proton gradient. This chain is NADH-quinone oxidoreductase subunit I, found in Wolinella succinogenes (strain ATCC 29543 / DSM 1740 / CCUG 13145 / JCM 31913 / LMG 7466 / NCTC 11488 / FDC 602W) (Vibrio succinogenes).